The following is a 399-amino-acid chain: CCA-adding enzyme (399 aa).

ATP is bound by residues glycine 32 and arginine 35. CTP contacts are provided by glycine 32 and arginine 35. Mg(2+) is bound by residues aspartate 45 and aspartate 47. 5 residues coordinate ATP: arginine 116, aspartate 159, arginine 162, arginine 165, and arginine 168. CTP contacts are provided by arginine 116, aspartate 159, arginine 162, arginine 165, and arginine 168.

Belongs to the tRNA nucleotidyltransferase/poly(A) polymerase family. Bacterial CCA-adding enzyme type 3 subfamily. In terms of assembly, homodimer. Mg(2+) is required as a cofactor.

It catalyses the reaction a tRNA precursor + 2 CTP + ATP = a tRNA with a 3' CCA end + 3 diphosphate. The catalysed reaction is a tRNA with a 3' CCA end + 2 CTP + ATP = a tRNA with a 3' CCACCA end + 3 diphosphate. In terms of biological role, catalyzes the addition and repair of the essential 3'-terminal CCA sequence in tRNAs without using a nucleic acid template. Adds these three nucleotides in the order of C, C, and A to the tRNA nucleotide-73, using CTP and ATP as substrates and producing inorganic pyrophosphate. tRNA 3'-terminal CCA addition is required both for tRNA processing and repair. Also involved in tRNA surveillance by mediating tandem CCA addition to generate a CCACCA at the 3' terminus of unstable tRNAs. While stable tRNAs receive only 3'-terminal CCA, unstable tRNAs are marked with CCACCA and rapidly degraded. This is CCA-adding enzyme from Streptococcus pneumoniae (strain CGSP14).